The following is a 195-amino-acid chain: MPKLGMQSIRRRQLIDATLEAINEVGMHDATIAQIARRAGVSTGIISHYFRDKNGLLEATMRDITSQLRDAVLNRLHALPQGSAEQRLQAIVGGNFDETQVSSAAMKAWLAFWASSMHQPMLYRLQQVSSRRLLSNLVSEFRRELPREQAQEAGYGLAALIDGLWLRAALSGKPLDKPLAHSLTRHFITQHLPTD.

Residues 8 to 68 (SIRRRQLIDA…ATMRDITSQL (61 aa)) form the HTH tetR-type domain. Positions 31 to 50 (TIAQIARRAGVSTGIISHYF) form a DNA-binding region, H-T-H motif.

It functions in the pathway amine and polyamine biosynthesis; betaine biosynthesis via choline pathway [regulation]. Functionally, repressor involved in the biosynthesis of the osmoprotectant glycine betaine. It represses transcription of the choline transporter BetT and the genes of BetAB involved in the synthesis of glycine betaine. This chain is HTH-type transcriptional regulator BetI, found in Escherichia coli O8 (strain IAI1).